Consider the following 1507-residue polypeptide: DNA-directed RNA polymerase subunit beta' (1507 aa).

Zn(2+)-binding residues include C71, C73, C86, and C89. Residues D470, D472, and D474 each contribute to the Mg(2+) site. Residues C800, C874, C881, and C884 each coordinate Zn(2+).

It belongs to the RNA polymerase beta' chain family. As to quaternary structure, the RNAP catalytic core consists of 2 alpha, 1 beta, 1 beta' and 1 omega subunit. When a sigma factor is associated with the core the holoenzyme is formed, which can initiate transcription. Mg(2+) serves as cofactor. Zn(2+) is required as a cofactor.

The catalysed reaction is RNA(n) + a ribonucleoside 5'-triphosphate = RNA(n+1) + diphosphate. Functionally, DNA-dependent RNA polymerase catalyzes the transcription of DNA into RNA using the four ribonucleoside triphosphates as substrates. The polypeptide is DNA-directed RNA polymerase subunit beta' (Nitratiruptor sp. (strain SB155-2)).